A 132-amino-acid chain; its full sequence is Small ribosomal subunit protein uS11 (132 aa).

The segment at 113–132 (VTPIPHDGTRAPGGKRGRRV) is disordered.

This sequence belongs to the universal ribosomal protein uS11 family. As to quaternary structure, part of the 30S ribosomal subunit.

Functionally, located on the platform of the 30S subunit. The polypeptide is Small ribosomal subunit protein uS11 (Methanocella arvoryzae (strain DSM 22066 / NBRC 105507 / MRE50)).